The primary structure comprises 267 residues: Cell division control protein 11 (267 aa).

Residues 6-263 (QNRRFTIMAA…ENYRAAVLEG (258 aa)) form the Septin-type G domain. A G1 motif region spans residues 16–23 (GPRGSGKS). GTP contacts are provided by residues 16–23 (GPRGSGKS), Gly66, 146–154 (KSDGLSITE), and Arg212. A G3 motif region spans residues 63–66 (DTPG). The tract at residues 145–148 (SKSD) is G4 motif.

Belongs to the TRAFAC class TrmE-Era-EngA-EngB-Septin-like GTPase superfamily. Septin GTPase family. Component of the septin complex.

Functionally, septins are GTPases involved in cytokinesis. The septins localize to the site of cleavage and act as a structural scaffold that recruits different components involved in diverse processes at specific stages during the cell cycle. Septins are also involved in cell morphogenesis, chitin deposition, cell cycle regulation, cell compartmentalization and spore wall formation. This chain is Cell division control protein 11 (CDC11), found in Encephalitozoon cuniculi (strain GB-M1) (Microsporidian parasite).